Here is a 420-residue protein sequence, read N- to C-terminus: Glucose-1-phosphate adenylyltransferase (420 aa).

Alpha-D-glucose 1-phosphate contacts are provided by residues Tyr107, Gly172, 187 to 188, and Ser205; that span reads EK.

Belongs to the bacterial/plant glucose-1-phosphate adenylyltransferase family. As to quaternary structure, homotetramer.

The enzyme catalyses alpha-D-glucose 1-phosphate + ATP + H(+) = ADP-alpha-D-glucose + diphosphate. The protein operates within glycan biosynthesis; glycogen biosynthesis. Its function is as follows. Involved in the biosynthesis of ADP-glucose, a building block required for the elongation reactions to produce glycogen. Catalyzes the reaction between ATP and alpha-D-glucose 1-phosphate (G1P) to produce pyrophosphate and ADP-Glc. This is Glucose-1-phosphate adenylyltransferase from Rhodopseudomonas palustris (strain TIE-1).